Reading from the N-terminus, the 148-residue chain is uncharacterized protein (148 aa).

Residues 36–45 (PGAPSAGPMS) show a composition bias toward low complexity. Residues 36–148 (PGAPSAGPMS…SGTAFFPGTT (113 aa)) are disordered. The span at 46–55 (DSNSKGSTPR) shows a compositional bias: polar residues.

This is an uncharacterized protein from Bovine leukemia virus (isolate Japanese BLV-1) (BLV).